A 712-amino-acid chain; its full sequence is T-box transcription factor TBX2 (712 aa).

Positions 109-287 (LEAKELWDQF…NNPFAKGFRD (179 aa)) form a DNA-binding region, T-box. Residues 313–450 (PERDGAESDA…EGKEQGLAPL (138 aa)) are disordered. The span at 326 to 336 (DPPPAREPPTS) shows a compositional bias: pro residues. A phosphoserine mark is found at Ser-336, Ser-342, and Ser-360. 3 stretches are compositionally biased toward basic and acidic residues: residues 363–372 (EPERLSEERA), 391–409 (TEPE…KEPA), and 421–444 (SLEK…EGKE). A repression domain 1 (RD1) region spans residues 518–601 (GGNGGGGGPG…ATSAAAAAAA (84 aa)). A phosphoserine mark is found at Ser-622, Ser-653, Ser-657, and Ser-676. Positions 637-687 (LTTGLASEGSKAAGGNSREPSPLPELALRKVGAPSRGALSPSGSAKEAANE) are disordered.

In terms of assembly, binds DNA as a monomer. Interacts with PML (isoform PML-2, isoform PML-3 and isoform PML-4). In terms of tissue distribution, expressed primarily in adult in kidney, lung, and placenta. Weak expression in heart and ovary.

The protein localises to the nucleus. Functionally, transcription factor which acts as a transcriptional repressor. May also function as a transcriptional activator. Binds to the palindromic T site 5'-TTCACACCTAGGTGTGAA-3' DNA sequence, or a half-site, which are present in the regulatory region of several genes. Required for cardiac atrioventricular canal formation. May cooperate with NKX2.5 to negatively modulate expression of NPPA/ANF in the atrioventricular canal. May play a role as a positive regulator of TGFB2 expression, perhaps acting in concert with GATA4 in the developing outflow tract myocardium. Plays a role in limb pattern formation. Acts as a transcriptional repressor of ADAM10 gene expression, perhaps in concert with histone deacetylase HDAC1 as cofactor. Involved in branching morphogenesis in both developing lungs and adult mammary glands, via negative modulation of target genes; acting redundantly with TBX3. Required, together with TBX3, to maintain cell proliferation in the embryonic lung mesenchyme; perhaps acting downstream of SHH, BMP and TGFbeta signaling. Involved in modulating early inner ear development, acting independently of, and also redundantly with TBX3, in different subregions of the developing ear. Acts as a negative regulator of PML function in cellular senescence. Acts as a negative regulator of expression of CDKN1A/p21, IL33 and CCN4; repression of CDKN1A is enhanced in response to UV-induced stress, perhaps as a result of phosphorylation by p38 MAPK. Negatively modulates expression of CDKN2A/p14ARF and CDH1/E-cadherin. Plays a role in induction of the epithelial-mesenchymal transition (EMT). Plays a role in melanocyte proliferation, perhaps via regulation of cyclin CCND1. Involved in melanogenesis, acting via negative modulation of expression of DHICA oxidase/TYRP1 and P protein/OCA2. Involved in regulating retinal pigment epithelium (RPE) cell proliferation, perhaps via negatively modulating transcription of the transcription factor CEBPD. This is T-box transcription factor TBX2 (TBX2) from Homo sapiens (Human).